The primary structure comprises 284 residues: Tropomyosin beta chain (284 aa).

The residue at position 1 (methionine 1) is an N-acetylmethionine. The interval 1–78 (MDAIKKKMQM…EKLEQAEKKA (78 aa)) is disordered. The stretch at 1-284 (MDAIKKKMQM…DNALNDITSL (284 aa)) forms a coiled coil. Composition is skewed to basic and acidic residues over residues 12-40 (KLDK…KQLE) and 51-78 (KGTE…EKKA). Phosphothreonine is present on threonine 53. A Phosphoserine; by PIK3CG modification is found at serine 61. Threonine 79 is modified (phosphothreonine). Phosphoserine is present on serine 87. Residue threonine 108 is modified to Phosphothreonine. The disordered stretch occupies residues 117–136 (EKAADESERGMKVIENRAMK). Residues serine 158, serine 206, and serine 215 each carry the phosphoserine modification. Residue threonine 252 is modified to Phosphothreonine. Residue tyrosine 261 is modified to Phosphotyrosine. Serine 271 is modified (phosphoserine). Threonine 282 bears the Phosphothreonine mark. A Phosphoserine modification is found at serine 283.

The protein belongs to the tropomyosin family. Homodimer. Heterodimer of an alpha (TPM1, TPM3 or TPM4) and a beta (TPM2) chain. Phosphorylated on Ser-61 by PIK3CG. Phosphorylation on Ser-61 is required for ADRB2 internalization.

The protein resides in the cytoplasm. It is found in the cytoskeleton. In terms of biological role, binds to actin filaments in muscle and non-muscle cells. Plays a central role, in association with the troponin complex, in the calcium dependent regulation of vertebrate striated muscle contraction. Smooth muscle contraction is regulated by interaction with caldesmon. In non-muscle cells is implicated in stabilizing cytoskeleton actin filaments. The non-muscle isoform may have a role in agonist-mediated receptor internalization. The sequence is that of Tropomyosin beta chain (Tpm2) from Mus musculus (Mouse).